The following is a 330-amino-acid chain: Transcription factor TGA2 (330 aa).

Residues 1-48 (MADTSPRTDVSTDDDTDHPDLGSEGALVNTAASDSSDRSKGKMDQKTL) form a disordered region. A compositionally biased stretch (basic and acidic residues) spans 35–47 (SSDRSKGKMDQKT). The bZIP domain maps to 44–107 (DQKTLRRLAQ…GTGDQAHSTG (64 aa)). 2 coiled-coil regions span residues 45–142 (QKTL…HAGD) and 217–244 (INNLQQTSQQAEDALSQGMESLQQSLAD). Positions 46–66 (KTLRRLAQNREAARKSRLRKK) are basic motif. The interval 72–86 (LENSRLKLTQLEQEL) is leucine-zipper. The region spanning 111–327 (ALAFDAEHSR…RALSSLWLAR (217 aa)) is the DOG1 domain.

The protein belongs to the bZIP family. Binds DNA as a dimer. Interacts with NPR1, NPR3 and NPR4. Interacts with GRXC7/ROXY1 and GRXC9/GRX480. Expressed in the whole plant.

The protein localises to the nucleus. In terms of biological role, transcriptional activator that binds specifically to the DNA sequence 5'-TGACG-3'. Recognizes ocs elements like the as-1 motif of the cauliflower mosaic virus 35S promoter. Binding to the as-1-like cis elements mediate auxin- and salicylic acid-inducible transcription. Required to induce the systemic acquired resistance (SAR) via the regulation of pathogenesis-related genes expression. Binding to the as-1 element of PR-1 promoter is salicylic acid-inducible and mediated by NPR1. Could also bind to the C-boxes (5'-ATGACGTCAT-3') with high affinity. In Arabidopsis thaliana (Mouse-ear cress), this protein is Transcription factor TGA2 (TGA2).